The primary structure comprises 498 residues: PE-PGRS family protein PE_PGRS33 (498 aa).

The tract at residues 1–30 (MSFVVTIPEALAAVATDLAGIGSTIGTANA) is essential for translocation to the cell surface. The PE domain occupies 1 to 93 (MSFVVTIPEA…AGSYAAAEAA (93 aa)). The interval 140 to 260 (GNGGAGGSGA…GLFFGVGGAG (121 aa)) is interacts with TLR2.

Belongs to the mycobacterial PE family. PGRS subfamily. As to quaternary structure, interacts with human TLR2.

The protein localises to the secreted. It localises to the cell wall. Its subcellular location is the cell surface. It is found in the cell outer membrane. Its activity is regulated as follows. Binding of Ca(2+) to PE_PGRS33 induces conformational changes and increases affinity for TLR2. Its function is as follows. Induces TNF-alpha release through human Toll-like receptor 2 (TLR2) signaling pathway, leading to macrophage apoptosis. The signaling pathway involves TLR2-dependent activation of the mitogen-activated protein kinase kinase kinase 5 (ASK1), which activates the p38 and JNK MAPKs, leading to enhanced expression of TNF-alpha and tumor necrosis factor receptor superfamily member 1A (TNFRI) genes. Signals are amplified through classical caspase 8-dependent mitochondrial release of cytochrome c, leading to the activation of caspases 9 and 3. Mediates Ca(2+)-dependent up-regulation of the anti-inflammatory cytokine IL-10. Mediates entry into macrophages in a TLR2-dependent mechanism and activates the TLR2-dependent pro-adhesive pathway. The protein is PE-PGRS family protein PE_PGRS33 of Mycobacterium tuberculosis (strain ATCC 25618 / H37Rv).